We begin with the raw amino-acid sequence, 104 residues long: Complex III assembly factor LYRM7 (104 aa).

Position 60 is a phosphoserine (Ser60).

Belongs to the complex I LYR family. Interacts with UQCRFS1.

Its subcellular location is the mitochondrion matrix. In terms of biological role, assembly factor required for Rieske Fe-S protein UQCRFS1 incorporation into the cytochrome b-c1 (CIII) complex. Functions as a chaperone, binding to this subunit within the mitochondrial matrix and stabilizing it prior to its translocation and insertion into the late CIII dimeric intermediate within the mitochondrial inner membrane. The protein is Complex III assembly factor LYRM7 (Lyrm7) of Mus musculus (Mouse).